We begin with the raw amino-acid sequence, 238 residues long: Probable rhamnogalacturonate lyase B (238 aa).

The N-terminal stretch at 1 to 19 (MRLRTSLGVASACASVASA) is a signal peptide. 3 N-linked (GlcNAc...) asparagine glycosylation sites follow: N27, N110, and N143.

Belongs to the polysaccharide lyase 4 family.

It localises to the secreted. It catalyses the reaction Endotype eliminative cleavage of L-alpha-rhamnopyranosyl-(1-&gt;4)-alpha-D-galactopyranosyluronic acid bonds of rhamnogalacturonan I domains in ramified hairy regions of pectin leaving L-rhamnopyranose at the reducing end and 4-deoxy-4,5-unsaturated D-galactopyranosyluronic acid at the non-reducing end.. In terms of biological role, pectinolytic enzymes consist of four classes of enzymes: pectin lyase, polygalacturonase, pectin methylesterase and rhamnogalacturonase. Degrades the rhamnogalacturonan I (RG-I) backbone of pectin. This chain is Probable rhamnogalacturonate lyase B (rglB), found in Aspergillus oryzae (strain ATCC 42149 / RIB 40) (Yellow koji mold).